A 67-amino-acid chain; its full sequence is N-(5'-phosphoribosyl)anthranilate isomerase (67 aa).

This sequence belongs to the TrpF family.

It carries out the reaction N-(5-phospho-beta-D-ribosyl)anthranilate = 1-(2-carboxyphenylamino)-1-deoxy-D-ribulose 5-phosphate. The protein operates within amino-acid biosynthesis; L-tryptophan biosynthesis; L-tryptophan from chorismate: step 3/5. This is N-(5'-phosphoribosyl)anthranilate isomerase (trpF) from Methanococcus voltae.